The following is a 460-amino-acid chain: Chromosomal replication initiator protein DnaA 2 (460 aa).

Positions 1–68 are domain I, interacts with DnaA modulators; that stretch reads MRAWEDFLLL…KTSLVNNNGK (68 aa). A domain II region spans residues 68–102; the sequence is KLIRVHITSLDKTAPFYKEKQIQQEKTAYFTMQYG. Residues 103 to 321 form a domain III, AAA+ region region; sequence NVNPEMTFGN…DALKLLSKRV (219 aa). Positions 151, 153, 154, and 155 each coordinate ATP. The tract at residues 322–460 is domain IV, binds dsDNA; sequence AYKKLAQQLL…EFFPEEEISC (139 aa).

This sequence belongs to the DnaA family. In terms of assembly, oligomerizes as a right-handed, spiral filament on DNA at oriC.

It localises to the cytoplasm. In terms of biological role, plays an essential role in the initiation and regulation of chromosomal replication. ATP-DnaA binds to the origin of replication (oriC) to initiate formation of the DNA replication initiation complex once per cell cycle. Binds the DnaA box (a 9 base pair repeat at the origin) and separates the double-stranded (ds)DNA. Forms a right-handed helical filament on oriC DNA; dsDNA binds to the exterior of the filament while single-stranded (ss)DNA is stabiized in the filament's interior. The ATP-DnaA-oriC complex binds and stabilizes one strand of the AT-rich DNA unwinding element (DUE), permitting loading of DNA polymerase. After initiation quickly degrades to an ADP-DnaA complex that is not apt for DNA replication. Binds acidic phospholipids. The sequence is that of Chromosomal replication initiator protein DnaA 2 from Chlamydia caviae (strain ATCC VR-813 / DSM 19441 / 03DC25 / GPIC) (Chlamydophila caviae).